A 223-amino-acid polypeptide reads, in one-letter code: N-terminal Xaa-Pro-Lys N-methyltransferase 1-B (223 aa).

Residues Gly-69, Arg-74, 91-93 (DVT), 119-120 (LQ), and Gln-135 each bind S-adenosyl-L-methionine.

This sequence belongs to the methyltransferase superfamily. NTM1 family.

The protein localises to the nucleus. It carries out the reaction N-terminal L-alanyl-L-prolyl-L-lysyl-[protein] + 3 S-adenosyl-L-methionine = N-terminal N,N,N-trimethyl-L-alanyl-L-prolyl-L-lysyl-[protein] + 3 S-adenosyl-L-homocysteine + 3 H(+). The enzyme catalyses N-terminal L-seryl-L-prolyl-L-lysyl-[protein] + 3 S-adenosyl-L-methionine = N-terminal N,N,N-trimethyl-L-seryl-L-prolyl-L-lysyl-[protein] + 3 S-adenosyl-L-homocysteine + 3 H(+). The catalysed reaction is N-terminal L-prolyl-L-prolyl-L-lysyl-[protein] + 2 S-adenosyl-L-methionine = N-terminal N,N-dimethyl-L-prolyl-L-prolyl-L-lysyl-[protein] + 2 S-adenosyl-L-homocysteine + 2 H(+). Distributive alpha-N-methyltransferase that methylates the N-terminus of target proteins containing the N-terminal motif [Ala/Gly/Pro/Ser]-Pro-Lys when the initiator Met is cleaved. Specifically catalyzes mono-, di- or tri-methylation of the exposed alpha-amino group of the Ala, Gly or Ser residue in the [Ala/Gly/Ser]-Pro-Lys motif and mono- or di-methylation of Pro in the Pro-Pro-Lys motif. Required during mitosis for normal bipolar spindle formation and chromosome segregation via its action on target proteins. In Xenopus laevis (African clawed frog), this protein is N-terminal Xaa-Pro-Lys N-methyltransferase 1-B (ntmt1-b).